Reading from the N-terminus, the 555-residue chain is Formate--tetrahydrofolate ligase (555 aa).

The protein belongs to the formate--tetrahydrofolate ligase family.

The catalysed reaction is (6S)-5,6,7,8-tetrahydrofolate + formate + ATP = (6R)-10-formyltetrahydrofolate + ADP + phosphate. It participates in one-carbon metabolism; tetrahydrofolate interconversion. In Porphyromonas gingivalis (strain ATCC BAA-308 / W83), this protein is Formate--tetrahydrofolate ligase.